The sequence spans 94 residues: MEVKLLNIGFGNTVIANRVIAIVSPASAPMKRLKEDARQANKLIDATMGRRTRAIIVTDSDHIILSGVQAETIAQRLLTEGGVRDVNLLKQAKD.

Belongs to the RemA family.

In Syntrophobacter fumaroxidans (strain DSM 10017 / MPOB), this protein is Putative regulatory protein Sfum_3631.